Consider the following 138-residue polypeptide: HTH-type transcriptional regulator CymR (138 aa).

Residues Lys2–Ser125 form the HTH rrf2-type domain. A DNA-binding region (H-T-H motif) is located at residues Leu28–Asn51.

In terms of assembly, homodimer. Forms homotetramers at higher concentrations of protein. Forms CymR(2):CysK(2) or CymR(4):CysK(4) complexes in the absence of O-acetylserine.

Its function is as follows. Master repressor of cysteine metabolism in B.subtilis. Controls the expression of genes involved either in cysteine synthesis from sulfide (cysK), sulfonates (ssu), or methionine (mccAB) or in cystine uptake (tcyP). Activity of CymR is positively regulated by CysK in response to cysteine availability. When cysteine is present, the pool of O-acetylserine (OAS) is low, which leads to the formation of a CymR-CysK complex and transcriptional repression of the CymR regulon occurs. In the absence of cysteine, the OAS pool is high and the CymR-CysK complex is mostly dissociated, leading to a faster dissociation of CymR from its DNA targets and the lifting of CymR-dependent repression. In Bacillus subtilis (strain 168), this protein is HTH-type transcriptional regulator CymR (cymR).